The following is a 382-amino-acid chain: Methylthioribose-1-phosphate isomerase (382 aa).

The active-site Proton donor is Asp258.

This sequence belongs to the eIF-2B alpha/beta/delta subunits family. MtnA subfamily.

The protein localises to the cytoplasm. Its subcellular location is the nucleus. The catalysed reaction is 5-(methylsulfanyl)-alpha-D-ribose 1-phosphate = 5-(methylsulfanyl)-D-ribulose 1-phosphate. The protein operates within amino-acid biosynthesis; L-methionine biosynthesis via salvage pathway; L-methionine from S-methyl-5-thio-alpha-D-ribose 1-phosphate: step 1/6. In terms of biological role, catalyzes the interconversion of methylthioribose-1-phosphate (MTR-1-P) into methylthioribulose-1-phosphate (MTRu-1-P). The polypeptide is Methylthioribose-1-phosphate isomerase (Laccaria bicolor (strain S238N-H82 / ATCC MYA-4686) (Bicoloured deceiver)).